The following is a 173-amino-acid chain: 2-C-methyl-D-erythritol 2,4-cyclodiphosphate synthase (173 aa).

The a divalent metal cation site is built by aspartate 17 and histidine 19. 4-CDP-2-C-methyl-D-erythritol 2-phosphate-binding positions include 17–19 and 49–50; these read DVH and HS. Histidine 57 is a binding site for a divalent metal cation. 4-CDP-2-C-methyl-D-erythritol 2-phosphate contacts are provided by residues 76–80, 147–150, and arginine 157; these read FPNTD and TTTE.

Belongs to the IspF family. In terms of assembly, homotrimer. Requires a divalent metal cation as cofactor.

It carries out the reaction 4-CDP-2-C-methyl-D-erythritol 2-phosphate = 2-C-methyl-D-erythritol 2,4-cyclic diphosphate + CMP. It functions in the pathway isoprenoid biosynthesis; isopentenyl diphosphate biosynthesis via DXP pathway; isopentenyl diphosphate from 1-deoxy-D-xylulose 5-phosphate: step 4/6. In terms of biological role, involved in the biosynthesis of isopentenyl diphosphate (IPP) and dimethylallyl diphosphate (DMAPP), two major building blocks of isoprenoid compounds. Catalyzes the conversion of 4-diphosphocytidyl-2-C-methyl-D-erythritol 2-phosphate (CDP-ME2P) to 2-C-methyl-D-erythritol 2,4-cyclodiphosphate (ME-CPP) with a corresponding release of cytidine 5-monophosphate (CMP). The sequence is that of 2-C-methyl-D-erythritol 2,4-cyclodiphosphate synthase from Ehrlichia ruminantium (strain Gardel).